Here is a 1242-residue protein sequence, read N- to C-terminus: MNATFRPKPAGSRWTDEQWKAIAAGGRDILVAAAAGSGKTAVLVERIIQKVTAEEGAVDIDRLLVVTFTNAAAAEMKARIGEALERELANRPHSLHLRRQLSLLNRASISTLHSFCLDVIRKYYYLLDLDPSFRIADETEIELLKEDVLEELLEEEYGKADNERFFAVVDAYTGDRSDAELQEMILALYEFSRSHPAPDEWLADLVSMYDVDEQTNVETLPPARYIAQHAAMELAAAKRFIGLALALAEKESGPKPYEKRLREDMDLIADLERRLSGSWDELYHALQSLSFGRLPPCRGDGFDAELIDEAKSLRDQAKKKIEALRDNVFSLHPSAWLRHMREMKPVVETIAALVRRFSAMFEAAKREKGIVDFSDLEHYCLRILRQYDPETGEWQPSSAALEYQAQFDEVLVDEYQDTNLVQETILQLVKKGSERTGNLFMVGDVKQSIYRFRLAEPMLFLDKYKRFTADGEAGGMKIDLASNFRSRAEVLDGTNFLFAQIMGEAVGEMVYDEAAQLKYGADYPEGTDAVPEVMIIDRQRTSEEDEEETAELEAAELESRLMAEKIKEIVSRPFYVYDRSSGQQRRAMYRDIVVLVRSMTNAPQMIEQLQAQGIPAAADLSSGYFQATEISVMLSLLKVIDNPYQDIPLAAVLRSPLFRFDENELAMIRLSDPKGTFFEALQAFCQKTAETGEEENAKEKAISFLNKLEEWRTMARRRSLADLIWQLYRDTQFYDFVGALPGGKQRQANLRALYDRARQYESTSFRGLFRFLRFIERLQERGDDLGAARPLGDQEDVVRVMTIHSSKGLEFPIVFLVGLARPFYTRDLHSPYLLDKELGFAARFVHPRLRISYPTLPLLAIQVKKRLELLAEEMRILYVALTRAKEKLYLLASVNDADKEIEKWKGVAAESGWLLPDDVRASARSYLDWIGRALIRHRDGRSLVEVNRPDEIASHPSVWRFEIVSAAKLRNAEVSTDREDGGALVALEQGRPVPTQGEWEEEARRRLLWRYRYGKETVVRAKQSVSELKEQQALFGEQADEWLPRKGTAPLFSRPRFMQEKTLTPAEKGTALHVVMRHLDLHAPMDESSIRSQIIRLVEKELLSAEQAETVDAAAIVAFFATDIGRRLCAAREVYREVPFSLGLPADELYGSEGMESGRRLLVQGVVDCVFADERGYVVIDYKTDEVTGRFAGQKEEATRFLLGRYGGQMRLYRRAIEQIWRVPVAECYLYSFDGEYFLAVE.

The UvrD-like helicase ATP-binding domain occupies 12–487 (SRWTDEQWKA…IDLASNFRSR (476 aa)). Residue 33–40 (AAAGSGKT) participates in ATP binding. Residues 514–808 (AAQLKYGADY…RVMTIHSSKG (295 aa)) enclose the UvrD-like helicase C-terminal domain.

This sequence belongs to the helicase family. AddA subfamily. In terms of assembly, heterodimer of AddA and AddB/RexB. Mg(2+) is required as a cofactor.

The enzyme catalyses Couples ATP hydrolysis with the unwinding of duplex DNA by translocating in the 3'-5' direction.. It catalyses the reaction ATP + H2O = ADP + phosphate + H(+). Its function is as follows. The heterodimer acts as both an ATP-dependent DNA helicase and an ATP-dependent, dual-direction single-stranded exonuclease. Recognizes the chi site generating a DNA molecule suitable for the initiation of homologous recombination. The AddA nuclease domain is required for chi fragment generation; this subunit has the helicase and 3' -&gt; 5' nuclease activities. This is ATP-dependent helicase/nuclease subunit A from Geobacillus thermodenitrificans (strain NG80-2).